A 379-amino-acid chain; its full sequence is Heme chaperone HemW (379 aa).

The Radical SAM core domain maps to 1–232; that stretch reads MLQKPNSAYF…MDILAKNGYN (232 aa). Tyr9 contributes to the S-adenosyl-L-methionine binding site. 3 residues coordinate [4Fe-4S] cluster: Cys15, Cys19, and Cys22. Residues Gly60, 61–62, Glu93, Gln120, Arg132, and Asp157 each bind S-adenosyl-L-methionine; that span reads GT.

This sequence belongs to the anaerobic coproporphyrinogen-III oxidase family. HemW subfamily. As to quaternary structure, homodimer.

It is found in the cytoplasm. It localises to the cell membrane. Could serve in the delivery of heme to a membrane-localized target protein. Binds one molecule of heme per monomer, possibly covalently; heme and Fe-S cluster binding are independent. Incubation with the reductant sodium dithionite increases binding. Does not have coproporphyrinogen III dehydrogenase activity in vitro, does not complement an E.coli hemN deletion in vivo. Binds 1 Fe-S cluster, it is probably [4Fe-4S]. The cluster is coordinated with 3 cysteines and an exchangeable S-adenosyl-L-methionine; only dimeric protein has the cluster. The polypeptide is Heme chaperone HemW (Lactococcus lactis subsp. lactis (strain IL1403) (Streptococcus lactis)).